A 396-amino-acid chain; its full sequence is GTPase Obg (396 aa).

Positions methionine 1–leucine 159 constitute an Obg domain. Residues alanine 160–glutamate 333 enclose the OBG-type G domain. Residues glycine 166–serine 173, phenylalanine 191–valine 195, aspartate 213–glycine 216, asparagine 283–aspartate 286, and serine 314–leucine 316 contribute to the GTP site. Serine 173 and threonine 193 together coordinate Mg(2+). Disordered regions lie at residues glutamate 337 to methionine 356 and leucine 373 to proline 396. A compositionally biased stretch (basic and acidic residues) spans glutamate 347–methionine 356. Residues serine 381–proline 396 are compositionally biased toward acidic residues.

Belongs to the TRAFAC class OBG-HflX-like GTPase superfamily. OBG GTPase family. In terms of assembly, monomer. The cofactor is Mg(2+).

It localises to the cytoplasm. Functionally, an essential GTPase which binds GTP, GDP and possibly (p)ppGpp with moderate affinity, with high nucleotide exchange rates and a fairly low GTP hydrolysis rate. Plays a role in control of the cell cycle, stress response, ribosome biogenesis and in those bacteria that undergo differentiation, in morphogenesis control. This Hahella chejuensis (strain KCTC 2396) protein is GTPase Obg.